Consider the following 36-residue polypeptide: Pancreatic polypeptide (36 aa).

Phe-36 is subject to Phenylalanine amide.

The protein belongs to the NPY family.

Its subcellular location is the secreted. In terms of biological role, hormone secreted by pancreatic cells that acts as a regulator of pancreatic and gastrointestinal functions. The sequence is that of Pancreatic polypeptide (ppy) from Aquarana catesbeiana (American bullfrog).